The sequence spans 1531 residues: Slit homolog 1 protein (1531 aa).

Residues 1 to 33 (MALTPQRGSSSGLSRPELWLLLWAAAWRLGATA) form the signal peptide. Positions 34–61 (CPALCTCTGTTVDCHGTGLQAIPKNIPR) constitute an LRRNT domain. LRR repeat units lie at residues 62 to 83 (NTER…DFAG), 86 to 107 (QLRV…AFDD), 110 to 131 (ELER…LFQN), 134 to 155 (ALSR…AFRG), 158 to 179 (DLKN…AFRA), and 182 to 203 (GLEV…SFNH). N-linked (GlcNAc...) asparagine glycosylation is present at asparagine 72. Asparagine 192 carries an N-linked (GlcNAc...) asparagine glycan. The 51-residue stretch at 215 to 265 (NHLFCDCHLAWLSQWLRQRPTIGLFTQCSGPASLRGLNVAEVQKSEFSCSG) folds into the LRRCT 1 domain. The region spanning 273–309 (PACTLSSGSCPAMCSCSNGIVDCRGKGLTAIPANLPE) is the LRRNT 2 domain. Cysteine 286 and cysteine 295 are disulfide-bonded. LRR repeat units lie at residues 310–331 (TMTE…AFSP), 334–355 (KLRR…AFQG), 358–379 (SLNS…VFGG), 382–403 (TLQL…AFQD), and 406–427 (NLSL…TFTS). An N-linked (GlcNAc...) asparagine glycan is attached at asparagine 406. The 51-residue stretch at 439-489 (NPFICDCNLKWLADFLRTNPIETTGARCASPRRLANKRIGQIKSKKFRCSA) folds into the LRRCT 2 domain. 4 cysteine pairs are disulfide-bonded: cysteine 443-cysteine 466, cysteine 445-cysteine 487, cysteine 513-cysteine 519, and cysteine 517-cysteine 526. The LRRNT 3 domain maps to 504 to 540 (NSECTSDVACPHKCRCEASVVECSGLKLSKIPERIPQ). LRR repeat units lie at residues 541-562 (STTE…GLFK), 566-587 (HLKK…TFEG), 590-611 (SVSE…MFRG), 614-635 (GLRT…SFTG), and 638-659 (NVRL…AFDT). Asparagine 571 carries an N-linked (GlcNAc...) asparagine glycan. The N-linked (GlcNAc...) asparagine glycan is linked to asparagine 630. Residues 671–721 (NPFNCNCQLAWLGDWLRKRKIVTGNPRCQNPDFLRQIPLQDVAFPDFRCEE) form the LRRCT 3 domain. 2 disulfide bridges follow: cysteine 675–cysteine 698 and cysteine 677–cysteine 719. One can recognise an LRRNT 4 domain in the interval 725–761 (EVGCLPRPQCPQECACLDTVVRCSNKHLQALPKGIPK). N-linked (GlcNAc...) asparagine glycosylation is found at asparagine 762, asparagine 801, and asparagine 806. LRR repeat units lie at residues 762-783 (NVTE…LSTF), 785-806 (YLQL…SFTN), 809-830 (QLTT…AFQG), and 833-854 (SLRL…IFAD). In terms of domain architecture, LRRCT 4 spans 866–916 (NPLYCDCHLRWLSSWVKTGYKEPGIARCAGPPEMEGKLLLTTPAKKFECQG). EGF-like domains lie at 927-962 (DPCL…RNCE), 964-1003 (SLDS…LTCG), 1005-1041 (NTDD…RACE), 1043-1081 (LVDF…DNCS), 1083-1119 (NQDD…QLCE), and 1124-1160 (PRNS…PECE). 18 disulfide bridges follow: cysteine 929–cysteine 940, cysteine 934–cysteine 950, cysteine 952–cysteine 961, cysteine 968–cysteine 979, cysteine 973–cysteine 991, cysteine 993–cysteine 1002, cysteine 1009–cysteine 1020, cysteine 1014–cysteine 1029, cysteine 1031–cysteine 1040, cysteine 1047–cysteine 1060, cysteine 1054–cysteine 1069, cysteine 1071–cysteine 1080, cysteine 1087–cysteine 1098, cysteine 1092–cysteine 1107, cysteine 1109–cysteine 1118, cysteine 1128–cysteine 1139, cysteine 1133–cysteine 1148, and cysteine 1150–cysteine 1159. Residue asparagine 1026 is glycosylated (N-linked (GlcNAc...) asparagine). The N-linked (GlcNAc...) asparagine glycan is linked to asparagine 1079. The Laminin G-like domain occupies 1163–1336 (LSVNFVDRDT…QMKPGVVPGC (174 aa)). Residues asparagine 1186, asparagine 1256, and asparagine 1303 are each glycosylated (N-linked (GlcNAc...) asparagine). 14 cysteine pairs are disulfide-bonded: cysteine 1310/cysteine 1336, cysteine 1339/cysteine 1349, cysteine 1344/cysteine 1359, cysteine 1361/cysteine 1370, cysteine 1378/cysteine 1388, cysteine 1383/cysteine 1398, cysteine 1400/cysteine 1409, cysteine 1419/cysteine 1429, cysteine 1424/cysteine 1439, cysteine 1441/cysteine 1450, cysteine 1456/cysteine 1495, cysteine 1474/cysteine 1509, cysteine 1485/cysteine 1525, and cysteine 1489/cysteine 1527. 3 consecutive EGF-like domains span residues 1337 to 1371 (EPCR…LHCD), 1374 to 1410 (VDGP…ALCN), and 1415 to 1451 (VAEP…ELCE). A CTCK domain is found at 1456-1531 (CRGDPVRDFH…PTKCGCAPCA (76 aa)).

Interacts with ROBO1 and GREM1. As to expression, in adult brains expressed in the hippocampus, cerebral cortex, and olfactory bulb but not in the cerebellum. In embryo expressed in cerebral cortex.

The protein resides in the secreted. Functionally, thought to act as molecular guidance cue in cellular migration, and function appears to be mediated by interaction with roundabout homolog receptors. During neural development involved in axonal navigation at the ventral midline of the neural tube and projection of axons to different regions. SLIT1 and SLIT2 together seem to be essential for midline guidance in the forebrain by acting as repulsive signal preventing inappropriate midline crossing by axons projecting from the olfactory bulb. This chain is Slit homolog 1 protein (Slit1), found in Rattus norvegicus (Rat).